The sequence spans 250 residues: Tetrahydromethanopterin S-methyltransferase subunit D (250 aa).

The next 6 membrane-spanning stretches (helical) occupy residues 9–29, 47–67, 86–106, 144–164, 184–204, and 230–250; these read IIWM…VHFV, GTVQ…GFMM, IMIA…VGVV, IIGG…LIEV, LVAV…VIPS, and LVAS…LGGI.

The protein belongs to the MtrD family. As to quaternary structure, the complex is composed of 8 subunits; MtrA, MtrB, MtrC, MtrD, MtrE, MtrF, MtrG and MtrH.

The protein localises to the cell membrane. The enzyme catalyses 5-methyl-5,6,7,8-tetrahydromethanopterin + coenzyme M + 2 Na(+)(in) = 5,6,7,8-tetrahydromethanopterin + methyl-coenzyme M + 2 Na(+)(out). It functions in the pathway one-carbon metabolism; methanogenesis from CO(2); methyl-coenzyme M from 5,10-methylene-5,6,7,8-tetrahydromethanopterin: step 2/2. In terms of biological role, part of a complex that catalyzes the formation of methyl-coenzyme M and tetrahydromethanopterin from coenzyme M and methyl-tetrahydromethanopterin. This is an energy-conserving, sodium-ion translocating step. The sequence is that of Tetrahydromethanopterin S-methyltransferase subunit D from Methanosarcina barkeri (strain Fusaro / DSM 804).